The following is a 75-amino-acid chain: Dermaseptin-SP5 (75 aa).

The N-terminal stretch at 1 to 22 (MAFLKKSLFLVLFLGLVSLSMC) is a signal peptide. A propeptide spanning residues 23 to 45 (EEEKRENEVEEEQEDDEQSELRR) is cleaved from the precursor. The disordered stretch occupies residues 26–46 (KRENEVEEEQEDDEQSELRRS). The span at 30-40 (EVEEEQEDDEQ) shows a compositional bias: acidic residues. Proline 72 is modified (proline amide). Positions 74–75 (EQ) are excised as a propeptide.

This sequence belongs to the frog skin active peptide (FSAP) family. Dermaseptin subfamily. Expressed by the skin glands.

Its subcellular location is the secreted. The protein localises to the target cell membrane. Its function is as follows. Antimicrobial peptide with weak activity against Gram-positive and Gram-negative bacteria and fungi. Has been tested against E.coli (MIC=96.06-256 uM), S.aureus (MIC&gt;192.12 uM), K.pneumoniae (MIC&gt;189.00 uM) and C.albicans (MIC=384.24-1024 uM). Probably acts by disturbing membrane functions with its alpha-helical amphipathic structure. May penetrate bacterial membranes, but stay at the mammalian membrane surface. Does not show hemolytic activity. Does not interact at all with cardiolipin. The chain is Dermaseptin-SP5 from Agalychnis spurrelli (Gliding leaf frog).